The sequence spans 485 residues: MQKLKITGLSLIISGLLMAQRHAAEPVYPDQLRLFSLGQEVCGDKYRPITREEAQSVKSNIVNMMGQWQISGLANGWVIMGPVYNGEIKPGSASNTWCYPVNPVTGEIPTLSALDIPDGDEVDVQWRLVHDSANFIKPTSYLAHYLGYAWVGGNHSQYVGEDMDVTRDGDGWVIRGNNDGGCEGYRCGEKTAIKVSNFAYNLDPDSFKHGDVTQSDRQLVKTVVGWAINDSYTPQSAYDVTLRYDTATNWSKTNTYGLSEKVTTKNKFKWPLVGETELSIEIAANQSWASQNGGSTTTSLSQSVRPTVPARSKIPVKIELYKADISYPYEFKADVSYDLTLSGFLRWGGNAWYTHPDNRPNWNHTFVIGPYKDKASSIRYQWDKRYIPGEVKWWDWNWTIQQNGLSTMQNNLARVLRPVRAGITGDFSAESQFAGNIEIGAPVPLAADGKAPRALSARRGEQGLRLAIPLECRKSSPGLASATSA.

Positions 1–23 (MQKLKITGLSLIISGLLMAQRHA) are cleaved as a signal peptide. Intrachain disulfides connect C42-C98 and C182-C187. Positions 68 to 84 (WQISGLANGWVIMGPVY) are interaction with host N-linked glycan. The part of the transmembrane beta-barrel after proteolytic activation of the toxin and insertion into the host membrane stretch occupies residues 256–288 (YGLSEKVTTKNKFKWPLVGETELSIEIAANQSW). Residues 346 to 355 (RWGGNAWYTH) are interaction with glycans from host GPI-anchor. A propeptide spanning residues 446–485 (AADGKAPRALSARRGEQGLRLAIPLECRKSSPGLASATSA) is cleaved from the precursor.

Belongs to the aerolysin family. As to quaternary structure, homodimer in solution; homoheptamer in the host membrane. After binding to GPI-anchored proteins in target membranes and proteolytic removal of the C-terminal propeptide, the protein assembles into a heptameric pre-pore complex. A further conformation change leads to insertion into the host membrane. Post-translationally, proteolytic cleavage and subsequent release of the propeptide trigger a major conformation change, leading to the formation of a heptameric pre-pore that then inserts into the host membrane.

The protein localises to the secreted. It is found in the host cell membrane. Secreted, cytolytic toxin that forms pores in host membranes after proteolytic removal of a C-terminal propeptide, leading to destruction of the membrane permeability barrier and cell death. The pores are formed by transmembrane beta-strands and are approximately 3 nm in diameter. The sequence is that of Aerolysin-5 (ahh5) from Aeromonas hydrophila.